Here is a 572-residue protein sequence, read N- to C-terminus: 2-isopropylmalate synthase (572 aa).

The 275-residue stretch at 39–313 folds into the Pyruvate carboxyltransferase domain; sequence PVWMSTDLRD…HPGLDFSRIN (275 aa). Mg(2+) contacts are provided by Asp48, His252, His254, and Asn288. Positions 445 to 572 are regulatory domain; it reads VAAPYAYVEH…GVGRQVAATR (128 aa).

The protein belongs to the alpha-IPM synthase/homocitrate synthase family. LeuA type 2 subfamily. In terms of assembly, homodimer. The cofactor is Mg(2+).

The protein localises to the cytoplasm. The enzyme catalyses 3-methyl-2-oxobutanoate + acetyl-CoA + H2O = (2S)-2-isopropylmalate + CoA + H(+). It functions in the pathway amino-acid biosynthesis; L-leucine biosynthesis; L-leucine from 3-methyl-2-oxobutanoate: step 1/4. In terms of biological role, catalyzes the condensation of the acetyl group of acetyl-CoA with 3-methyl-2-oxobutanoate (2-ketoisovalerate) to form 3-carboxy-3-hydroxy-4-methylpentanoate (2-isopropylmalate). In Azoarcus sp. (strain BH72), this protein is 2-isopropylmalate synthase.